Consider the following 576-residue polypeptide: Peptidoglycan D,D-transpeptidase FtsI (576 aa).

Residues 22-42 (ITILLSLIIITIILVLSRITF) form a helical membrane-spanning segment. The active-site Acyl-ester intermediate is the S308.

The protein belongs to the transpeptidase family. FtsI subfamily.

It is found in the cell inner membrane. The enzyme catalyses Preferential cleavage: (Ac)2-L-Lys-D-Ala-|-D-Ala. Also transpeptidation of peptidyl-alanyl moieties that are N-acyl substituents of D-alanine.. It participates in cell wall biogenesis; peptidoglycan biosynthesis. Catalyzes cross-linking of the peptidoglycan cell wall at the division septum. The polypeptide is Peptidoglycan D,D-transpeptidase FtsI (Buchnera aphidicola subsp. Baizongia pistaciae (strain Bp)).